Consider the following 410-residue polypeptide: Chloroacetanilide N-alkylformylase, ferredoxin reductase component (410 aa).

Positions 14, 36, 49, 82, 130, 279, and 298 each coordinate FAD.

This sequence belongs to the FAD-dependent oxidoreductase family. As to quaternary structure, the chloroacetanilide N-alkylformylase multicomponent enzyme system is composed of an oxygenase component (CndA) and an electron transfer component formed by a ferredoxin reductase (CndC1) and a ferredoxin (CndB1). In vitro, chloroacetanilide N-alkylformylase assays in which CndB1 is substituted for CndB2 demonstrate that the two enzymes possess nearly identical activities. The cofactor is FAD.

The catalysed reaction is 2 reduced [2Fe-2S]-[ferredoxin] + NAD(+) + H(+) = 2 oxidized [2Fe-2S]-[ferredoxin] + NADH. Functionally, component of the chloroacetanilide N-alkylformylase multicomponent enzyme system involved in the degradation of chloroacetanilide herbicides (N-alkoxyalkyl-N-chloroacetyl-substituted aniline derivatives). In vitro, catalyzes the transfers of electrons from ferredoxin (CndB1) to NADH. N-dealkylase utilizes NADH, but not NADPH, as the electron donor. The protein is Chloroacetanilide N-alkylformylase, ferredoxin reductase component of Rhizorhabdus wittichii (strain DC-6 / KACC 16600) (Sphingomonas wittichii).